The chain runs to 117 residues: Hainantoxin-XV-5 (117 aa).

The first 20 residues, 1 to 20 (MKLCAVIIASLLVCVAVASS), serve as a signal peptide directing secretion. Positions 20–55 (SSDNQKEFAQEKEMTREETQSLGEHEKDDEVTGSEE) are disordered. Residues 21 to 56 (SDNQKEFAQEKEMTREETQSLGEHEKDDEVTGSEER) constitute a propeptide that is removed on maturation. The segment covering 23–55 (NQKEFAQEKEMTREETQSLGEHEKDDEVTGSEE) has biased composition (basic and acidic residues). 4 disulfide bridges follow: C58/C72, C65/C78, C69/C115, and C71/C91.

It belongs to the neurotoxin 03 (Tx2) family. 02 subfamily. HNTX-XV sub-subfamily. Expressed by the venom gland.

Its subcellular location is the secreted. Its function is as follows. Putative ion channel inhibitor. The sequence is that of Hainantoxin-XV-5 from Cyriopagopus hainanus (Chinese bird spider).